A 184-amino-acid polypeptide reads, in one-letter code: MNKGNLIKNYAVALLNNAMVDNIQDKIFEEITSINRIITDNFDIREFLFSPIVNKNDKINAVNSLAKNIKISTIVQNFLLLLVKNSRTAILSNIVDAYNTLLYESKNIKIVQVISANKLQPKEQEWIKSRIEKELNQTTEILFDIDNTIIGGIIIKYDSMLQDYSIKGSLEKIKKALKIVNIAV.

Belongs to the ATPase delta chain family. In terms of assembly, F-type ATPases have 2 components, F(1) - the catalytic core - and F(0) - the membrane proton channel. F(1) has five subunits: alpha(3), beta(3), gamma(1), delta(1), epsilon(1). F(0) has three main subunits: a(1), b(2) and c(10-14). The alpha and beta chains form an alternating ring which encloses part of the gamma chain. F(1) is attached to F(0) by a central stalk formed by the gamma and epsilon chains, while a peripheral stalk is formed by the delta and b chains.

The protein localises to the cell inner membrane. In terms of biological role, f(1)F(0) ATP synthase produces ATP from ADP in the presence of a proton or sodium gradient. F-type ATPases consist of two structural domains, F(1) containing the extramembraneous catalytic core and F(0) containing the membrane proton channel, linked together by a central stalk and a peripheral stalk. During catalysis, ATP synthesis in the catalytic domain of F(1) is coupled via a rotary mechanism of the central stalk subunits to proton translocation. Its function is as follows. This protein is part of the stalk that links CF(0) to CF(1). It either transmits conformational changes from CF(0) to CF(1) or is implicated in proton conduction. The sequence is that of ATP synthase subunit delta from Rickettsia conorii (strain ATCC VR-613 / Malish 7).